Here is a 473-residue protein sequence, read N- to C-terminus: Glycogen synthase (473 aa).

K15 is a binding site for ADP-alpha-D-glucose.

The protein belongs to the glycosyltransferase 1 family. Bacterial/plant glycogen synthase subfamily.

It catalyses the reaction [(1-&gt;4)-alpha-D-glucosyl](n) + ADP-alpha-D-glucose = [(1-&gt;4)-alpha-D-glucosyl](n+1) + ADP + H(+). It participates in glycan biosynthesis; glycogen biosynthesis. Synthesizes alpha-1,4-glucan chains using ADP-glucose. This is Glycogen synthase from Flavobacterium johnsoniae (strain ATCC 17061 / DSM 2064 / JCM 8514 / BCRC 14874 / CCUG 350202 / NBRC 14942 / NCIMB 11054 / UW101) (Cytophaga johnsonae).